Consider the following 132-residue polypeptide: uncharacterized protein (132 aa).

Belongs to the mycobacterial PPE family.

This is an uncharacterized protein from Mycobacterium tuberculosis (strain ATCC 25618 / H37Rv).